The sequence spans 451 residues: Tubulin beta-1 chain (451 aa).

The MREI motif signature appears at methionine 1 to isoleucine 4. GTP contacts are provided by glutamine 11, glutamate 69, serine 138, glycine 142, threonine 143, and glycine 144. Residue glutamate 69 coordinates Mg(2+). Serine 172 bears the Phosphoserine; by CDK1 mark. GTP contacts are provided by asparagine 204 and asparagine 226. Residues leucine 432–histidine 451 form a disordered region. The span at glutamate 433–histidine 451 shows a compositional bias: acidic residues. 5-glutamyl polyglutamate is present on glutamate 440.

Belongs to the tubulin family. In terms of assembly, dimer of alpha and beta chains. A typical microtubule is a hollow water-filled tube with an outer diameter of 25 nm and an inner diameter of 15 nM. Alpha-beta heterodimers associate head-to-tail to form protofilaments running lengthwise along the microtubule wall with the beta-tubulin subunit facing the microtubule plus end conferring a structural polarity. Microtubules usually have 13 protofilaments but different protofilament numbers can be found in some organisms and specialized cells. Interacts with RANBP10. Requires Mg(2+) as cofactor. Some glutamate residues at the C-terminus are polyglutamylated, resulting in polyglutamate chains on the gamma-carboxyl group. Polyglutamylation plays a key role in microtubule severing by spastin (SPAST). SPAST preferentially recognizes and acts on microtubules decorated with short polyglutamate tails: severing activity by SPAST increases as the number of glutamates per tubulin rises from one to eight, but decreases beyond this glutamylation threshold. Glutamylation is also involved in cilia motility. Post-translationally, some glutamate residues at the C-terminus are monoglycylated but not polyglycylated due to the absence of functional TTLL10 in human. Monoglycylation is mainly limited to tubulin incorporated into cilia and flagella axonemes, which is required for their stability and maintenance. Flagella glycylation controls sperm motility. Both polyglutamylation and monoglycylation can coexist on the same protein on adjacent residues, and lowering glycylation levels increases polyglutamylation, and reciprocally. In terms of processing, phosphorylated on Ser-172 by CDK1 during the cell cycle, from metaphase to telophase, but not in interphase. This phosphorylation inhibits tubulin incorporation into microtubules. In terms of tissue distribution, hematopoietic cell-specific. Major isotype in leukocytes, where it represents 50% of all beta-tubulins.

The protein localises to the cytoplasm. The protein resides in the cytoskeleton. Its function is as follows. Tubulin is the major constituent of microtubules, a cylinder consisting of laterally associated linear protofilaments composed of alpha- and beta-tubulin heterodimers. Microtubules grow by the addition of GTP-tubulin dimers to the microtubule end, where a stabilizing cap forms. Below the cap, tubulin dimers are in GDP-bound state, owing to GTPase activity of alpha-tubulin. This is Tubulin beta-1 chain (TUBB1) from Homo sapiens (Human).